A 450-amino-acid polypeptide reads, in one-letter code: tRNA-2-methylthio-N(6)-dimethylallyladenosine synthase (450 aa).

The region spanning 3–118 (KKVFIKTFGC…LPELLQQRER (116 aa)) is the MTTase N-terminal domain. The [4Fe-4S] cluster site is built by Cys12, Cys49, Cys81, Cys155, Cys159, and Cys162. The Radical SAM core domain maps to 141-376 (SVQGASAFVS…VIDTHIRSIS (236 aa)). A TRAM domain is found at 377–440 (ASRVGTVQRI…AYTLRGQYCA (64 aa)).

Belongs to the methylthiotransferase family. MiaB subfamily. As to quaternary structure, monomer. [4Fe-4S] cluster serves as cofactor.

It localises to the cytoplasm. It catalyses the reaction N(6)-dimethylallyladenosine(37) in tRNA + (sulfur carrier)-SH + AH2 + 2 S-adenosyl-L-methionine = 2-methylsulfanyl-N(6)-dimethylallyladenosine(37) in tRNA + (sulfur carrier)-H + 5'-deoxyadenosine + L-methionine + A + S-adenosyl-L-homocysteine + 2 H(+). Catalyzes the methylthiolation of N6-(dimethylallyl)adenosine (i(6)A), leading to the formation of 2-methylthio-N6-(dimethylallyl)adenosine (ms(2)i(6)A) at position 37 in tRNAs that read codons beginning with uridine. This is tRNA-2-methylthio-N(6)-dimethylallyladenosine synthase from Verminephrobacter eiseniae (strain EF01-2).